The sequence spans 252 residues: Putative zinc finger CCCH domain-containing protein 58 (252 aa).

Residues 35 to 62 form a C3H1-type zinc finger; sequence NHKSVLCMKWREGRCHNGVACRYAHGEE. Disordered regions lie at residues 71 to 95, 109 to 180, and 215 to 252; these read RVGG…SGST, RHGR…SAAD, and TATS…APPK. 2 stretches are compositionally biased toward low complexity: residues 133–149 and 229–238; these read SARS…TTPP and ITTTTSSSTT.

The chain is Putative zinc finger CCCH domain-containing protein 58 from Oryza sativa subsp. japonica (Rice).